The chain runs to 267 residues: Undecaprenyl-diphosphatase (267 aa).

Helical transmembrane passes span 1 to 21 (MTLWQAFILSLIQGITEFLPI), 39 to 59 (AGVAFDAFTGLGTLTAVLFYY), 85 to 105 (AKLGNQLIVATLPALLIGFMV), 117 to 137 (LLIASTTMIFAIFLAAADFWG), 189 to 209 (FSFLQSIPISAAAGGYGLWKL), 220 to 240 (LIALSYVTATLAAYVCIALFI), and 246 to 266 (VGMMPHVIYRLLLGAYLFFVF).

This sequence belongs to the UppP family.

It is found in the cell inner membrane. The catalysed reaction is di-trans,octa-cis-undecaprenyl diphosphate + H2O = di-trans,octa-cis-undecaprenyl phosphate + phosphate + H(+). Its function is as follows. Catalyzes the dephosphorylation of undecaprenyl diphosphate (UPP). Confers resistance to bacitracin. The polypeptide is Undecaprenyl-diphosphatase (Dichelobacter nodosus (strain VCS1703A)).